The primary structure comprises 661 residues: Zeaxanthin epoxidase, chloroplastic (661 aa).

A chloroplast-targeting transit peptide spans 1 to 50; it reads MASTLFYNSMNLSAAVFSRTHFPIPINKDFPLEFSPCIHTDYHLRSRTRS. Residues 82–110 and 360–373 contribute to the FAD site; these read RILV…VVFE and ILTW…LLGD. In terms of domain architecture, FHA spans 558-607; the sequence is CIIGSAPHGDVSGISIAIPKPQVSEMHARISYKDGAFYLTDLRSEHGTWI.

Requires FAD as cofactor.

The protein resides in the plastid. Its subcellular location is the chloroplast. The catalysed reaction is all-trans-zeaxanthin + 4 reduced [2Fe-2S]-[ferredoxin] + 2 O2 + 4 H(+) = all-trans-violaxanthin + 4 oxidized [2Fe-2S]-[ferredoxin] + 2 H2O. The protein operates within plant hormone biosynthesis; abscisate biosynthesis. Its function is as follows. Converts zeaxanthin into antheraxanthin and subsequently violaxanthin. Involved in the epoxidation of zeaxanthin. In Prunus armeniaca (Apricot), this protein is Zeaxanthin epoxidase, chloroplastic.